The primary structure comprises 124 residues: uncharacterized protein (124 aa).

A signal peptide spans 1–18 (MHIIKTLISVGVAFSLSA). C19 carries N-palmitoyl cysteine lipidation. A lipid anchor (S-diacylglycerol cysteine) is attached at C19.

The protein localises to the cell membrane. This is an uncharacterized protein from Pasteurella multocida (strain Pm70).